The primary structure comprises 64 residues: Large ribosomal subunit protein bL35 (64 aa).

A disordered region spans residues 1 to 20 (MKQKTHKGTAKRIKVTGSGK).

The protein belongs to the bacterial ribosomal protein bL35 family.

This is Large ribosomal subunit protein bL35 from Corynebacterium urealyticum (strain ATCC 43042 / DSM 7109).